Consider the following 332-residue polypeptide: Ketol-acid reductoisomerase (NADP(+)) (332 aa).

Residues 2–182 (AKVYHDTEVS…GATRAGVLET (181 aa)) enclose the KARI N-terminal Rossmann domain. NADP(+) is bound by residues 25–28 (YGSQ), Arg-48, Ser-53, and 83–86 (DTEQ). Residue His-108 is part of the active site. Gly-134 contacts NADP(+). Positions 183–328 (TFKEETETDL…KVLREMMPWL (146 aa)) constitute a KARI C-terminal knotted domain. Mg(2+) contacts are provided by Asp-191, Glu-195, Glu-227, and Glu-231. Ser-252 contacts substrate.

The protein belongs to the ketol-acid reductoisomerase family. Requires Mg(2+) as cofactor.

The catalysed reaction is (2R)-2,3-dihydroxy-3-methylbutanoate + NADP(+) = (2S)-2-acetolactate + NADPH + H(+). The enzyme catalyses (2R,3R)-2,3-dihydroxy-3-methylpentanoate + NADP(+) = (S)-2-ethyl-2-hydroxy-3-oxobutanoate + NADPH + H(+). It functions in the pathway amino-acid biosynthesis; L-isoleucine biosynthesis; L-isoleucine from 2-oxobutanoate: step 2/4. The protein operates within amino-acid biosynthesis; L-valine biosynthesis; L-valine from pyruvate: step 2/4. Functionally, involved in the biosynthesis of branched-chain amino acids (BCAA). Catalyzes an alkyl-migration followed by a ketol-acid reduction of (S)-2-acetolactate (S2AL) to yield (R)-2,3-dihydroxy-isovalerate. In the isomerase reaction, S2AL is rearranged via a Mg-dependent methyl migration to produce 3-hydroxy-3-methyl-2-ketobutyrate (HMKB). In the reductase reaction, this 2-ketoacid undergoes a metal-dependent reduction by NADPH to yield (R)-2,3-dihydroxy-isovalerate. The polypeptide is Ketol-acid reductoisomerase (NADP(+)) (Dictyoglomus turgidum (strain DSM 6724 / Z-1310)).